The sequence spans 196 residues: Chromophore lyase CpcT/CpeT (196 aa).

The protein belongs to the CpcT/CpeT biliprotein lyase family.

In terms of biological role, covalently attaches a chromophore to Cys residue(s) of phycobiliproteins. This is Chromophore lyase CpcT/CpeT from Synechococcus sp. (strain WH8020).